A 169-amino-acid chain; its full sequence is Orotate phosphoribosyltransferase (169 aa).

5-phospho-alpha-D-ribose 1-diphosphate is bound by residues R86, K90, H92, and 111–119; that span reads EDVTTSGGS. Orotate contacts are provided by T115 and R143.

Belongs to the purine/pyrimidine phosphoribosyltransferase family. PyrE subfamily. As to quaternary structure, homodimer. Mg(2+) is required as a cofactor.

It catalyses the reaction orotidine 5'-phosphate + diphosphate = orotate + 5-phospho-alpha-D-ribose 1-diphosphate. It participates in pyrimidine metabolism; UMP biosynthesis via de novo pathway; UMP from orotate: step 1/2. Its function is as follows. Catalyzes the transfer of a ribosyl phosphate group from 5-phosphoribose 1-diphosphate to orotate, leading to the formation of orotidine monophosphate (OMP). The chain is Orotate phosphoribosyltransferase from Methanocorpusculum labreanum (strain ATCC 43576 / DSM 4855 / Z).